The primary structure comprises 154 residues: Large ribosomal subunit protein uL30 (154 aa).

The disordered stretch occupies residues 114–139 (PTLRLHPPRGGHDGIKHPTKEGGQLG). Basic and acidic residues predominate over residues 123–133 (GGHDGIKHPTK).

Belongs to the universal ribosomal protein uL30 family. As to quaternary structure, part of the 50S ribosomal subunit.

This chain is Large ribosomal subunit protein uL30, found in Natronomonas pharaonis (strain ATCC 35678 / DSM 2160 / CIP 103997 / JCM 8858 / NBRC 14720 / NCIMB 2260 / Gabara) (Halobacterium pharaonis).